Reading from the N-terminus, the 332-residue chain is Phospho-N-acetylmuramoyl-pentapeptide-transferase (332 aa).

The next 8 membrane-spanning stretches (helical) occupy residues 9–29, 55–75, 79–99, 115–135, 155–175, 196–216, 253–273, and 312–332; these read IYTI…IIPF, TIGG…AGLI, LWVA…DDFI, MSLQ…ISVM, IPQY…VVVA, IVAA…LAIF, AVAI…IYFA, and VVIV…LGLN.

Belongs to the glycosyltransferase 4 family. MraY subfamily. Mg(2+) is required as a cofactor.

It localises to the cell membrane. The enzyme catalyses UDP-N-acetyl-alpha-D-muramoyl-L-alanyl-gamma-D-glutamyl-meso-2,6-diaminopimeloyl-D-alanyl-D-alanine + di-trans,octa-cis-undecaprenyl phosphate = di-trans,octa-cis-undecaprenyl diphospho-N-acetyl-alpha-D-muramoyl-L-alanyl-D-glutamyl-meso-2,6-diaminopimeloyl-D-alanyl-D-alanine + UMP. It functions in the pathway cell wall biogenesis; peptidoglycan biosynthesis. In terms of biological role, catalyzes the initial step of the lipid cycle reactions in the biosynthesis of the cell wall peptidoglycan: transfers peptidoglycan precursor phospho-MurNAc-pentapeptide from UDP-MurNAc-pentapeptide onto the lipid carrier undecaprenyl phosphate, yielding undecaprenyl-pyrophosphoryl-MurNAc-pentapeptide, known as lipid I. The sequence is that of Phospho-N-acetylmuramoyl-pentapeptide-transferase from Alkaliphilus oremlandii (strain OhILAs) (Clostridium oremlandii (strain OhILAs)).